The following is a 595-amino-acid chain: MAPEIHMTGPMCLIENTNGELVANPEALKILSAITQPVVVVAIVGLYRTGKSYLMNKLAGKNKGFSLGSTVKSHTKGIWMWCVPHPKKPEHTLVLLDTEGLGDVKKGDNQNDSWIFTLAVLLSSTLVYNSMGTINQQAMDQLYYVTELTHRIRSKSSPDENENEDSADFVSFFPDFVWTLRDFSLDLEADGQPLTPDEYLEYSLKLTQGTSQKDKNFNLPRLCIRKFFPKKKCFVFDLPIHRRKLAQLEKLQDEELDPEFVQQVADFCSYIFSNSKTKTLSGGIKVNGPRLESLVLTYINAISRGDLPCMENAVLALAQIENSAAVQKAIAHYDQQMGQKVQLPAETLQELLDLHRVSEREATEVYMKNSFKDVDHLFQKKLAAQLDKKRDDFCKQNQEASSDRCSALLQVIFSPLEEEVKAGIYSKPGGYCLFIQKLQDLEKKYYEEPRKGIQAEEILQTYLKSKESVTDAILQTDQILTEKEKEIEVECVKAESAQASAKMVEEMQIKYQQMMEEKEKSYQEHVKQLTEKMERERAQLLEEQEKTLTSKLQEQARVLKERCQGESTQLQNEIQKLQKTLKKKTKRYMSHKLKI.

The segment at 1–309 (MAPEIHMTGP…NAISRGDLPC (309 aa)) is GTPase domain (Globular). One can recognise a GB1/RHD3-type G domain in the interval 35-276 (TQPVVVVAIV…FCSYIFSNSK (242 aa)). GTP contacts are provided by residues 45-52 (GLYRTGKS), 67-69 (LGS), and 97-101 (DTEGL). Residues 482–595 (EKEKEIEVEC…KRYMSHKLKI (114 aa)) are a coiled coil.

Belongs to the TRAFAC class dynamin-like GTPase superfamily. GB1/RHD3 GTPase family. GB1 subfamily. In terms of assembly, heterodimer with other family members, including GBP1, GBP2 and GBP5. Dimerization regulates subcellular location.

The protein resides in the cytoplasm. The protein localises to the perinuclear region. It is found in the golgi apparatus membrane. The enzyme catalyses GTP + H2O = GDP + phosphate + H(+). In terms of biological role, interferon (IFN)-inducible GTPase that plays important roles in innate immunity against a diverse range of bacterial, viral and protozoan pathogens. Hydrolyzes GTP very efficiently; GDP rather than GMP is the major reaction product. Following infection, recruited to the pathogen-containing vacuoles or vacuole-escaped bacteria and acts as a positive regulator of inflammasome assembly by promoting the release of inflammasome ligands from bacteria. Acts by promoting lysis of pathogen-containing vacuoles, releasing pathogens into the cytosol. Following pathogen release in the cytosol, promotes recruitment of proteins that mediate bacterial cytolysis: this liberates ligands that are detected by inflammasomes, such as lipopolysaccharide (LPS) that activates the non-canonical CASP4/CASP11 inflammasome or double-stranded DNA (dsDNA) that activates the AIM2 inflammasome. Exhibits antiviral activity against influenza virus. Shows the most prominent antiviral activity in epithelial cells. In Homo sapiens (Human), this protein is Guanylate-binding protein 3 (GBP3).